We begin with the raw amino-acid sequence, 457 residues long: Phosphatidate cytidylyltransferase (457 aa).

6 consecutive transmembrane segments (helical) span residues 71-91 (VMIS…IVLI), 154-174 (FIVT…FVLF), 188-208 (GSLC…HLII), 214-234 (GLFW…FAYL), 255-275 (GFLG…RILS), and 330-350 (FHAL…GFFA).

The protein belongs to the CDS family. In terms of assembly, homodimer. The cofactor is Mg(2+).

It is found in the endoplasmic reticulum membrane. The protein resides in the cytoplasmic vesicle. Its subcellular location is the secretory vesicle. It catalyses the reaction a 1,2-diacyl-sn-glycero-3-phosphate + CTP + H(+) = a CDP-1,2-diacyl-sn-glycerol + diphosphate. Its pathway is phospholipid metabolism; CDP-diacylglycerol biosynthesis; CDP-diacylglycerol from sn-glycerol 3-phosphate: step 3/3. Its function is as follows. Supplies CDP-diacylglycerol, which may play an important role as both a precursor to phosphoinositide biosynthesis in the plasma membrane and as a negative effector of phosphatidylinositol 4-kinase activity, thereby exerting an effect on cell proliferation via a lipid-dependent signal transduction cascade. The sequence is that of Phosphatidate cytidylyltransferase (CDS1) from Saccharomyces cerevisiae (strain ATCC 204508 / S288c) (Baker's yeast).